Reading from the N-terminus, the 228-residue chain is 2,3-bisphosphoglycerate-dependent phosphoglycerate mutase (228 aa).

Substrate contacts are provided by residues 8-15 (RHGQSEWN), 21-22 (TG), Arg-60, 87-90 (ERHY), Lys-98, 114-115 (RR), and 180-181 (GN). His-9 acts as the Tele-phosphohistidine intermediate in catalysis. Residue Glu-87 is the Proton donor/acceptor of the active site.

The protein belongs to the phosphoglycerate mutase family. BPG-dependent PGAM subfamily. In terms of assembly, homodimer.

It carries out the reaction (2R)-2-phosphoglycerate = (2R)-3-phosphoglycerate. It participates in carbohydrate degradation; glycolysis; pyruvate from D-glyceraldehyde 3-phosphate: step 3/5. Its function is as follows. Catalyzes the interconversion of 2-phosphoglycerate and 3-phosphoglycerate. This chain is 2,3-bisphosphoglycerate-dependent phosphoglycerate mutase, found in Zymomonas mobilis subsp. mobilis (strain ATCC 31821 / ZM4 / CP4).